The chain runs to 265 residues: RING finger protein 208 (265 aa).

The disordered stretch occupies residues 83 to 106; that stretch reads MPTLEGASHTPPLPRRPRKGSSEL. Serine 103 carries the post-translational modification Phosphoserine. An RING-type zinc finger spans residues 147–194; that stretch reads CPTCGHTYNVTQRRPRVLSCLHSVCEQCLQILYESCPKYKFISCPTCH.

This Mus musculus (Mouse) protein is RING finger protein 208 (Rnf208).